Reading from the N-terminus, the 532-residue chain is Undecaprenyl-phosphate glucose phosphotransferase (532 aa).

The next 5 helical transmembrane spans lie at 81–101, 110–130, 155–175, 183–203, and 344–364; these read QVVVLSDAFCVCLAVVACIAW, ELSGALLLANIMAAGAFFLFP, VAFGEVVFCTVLVMLSWPFGV, WLTFVVAILFVERCVGTYILH, and TASVLLLLALAPLLTLVALAI.

Belongs to the bacterial sugar transferase family.

The protein resides in the membrane. It catalyses the reaction di-trans,octa-cis-undecaprenyl phosphate + UDP-alpha-D-glucose = alpha-D-glucosyl di-trans,octa-cis-undecaprenyl diphosphate + UMP. Involved in the biosynthesis of the exopolysaccharide acetan, a water-soluble polysaccharide involved in production of bacterial cellulose (BC). This chain is Undecaprenyl-phosphate glucose phosphotransferase (aceA), found in Komagataeibacter xylinus (Gluconacetobacter xylinus).